Consider the following 238-residue polypeptide: Survival of motor neuron-related-splicing factor 30 (238 aa).

Residues 72 to 132 (SWKVGEKCMA…RPVEEGRKAK (61 aa)) form the Tudor domain. Positions 142-160 (KKEMIAAQREYKKKKALKK) match the Nuclear localization signal motif.

It belongs to the SMN family. In terms of assembly, associates with spliceosomes.

Its subcellular location is the nucleus speckle. The protein localises to the nucleus. The protein resides in the cajal body. Its function is as follows. Involved in spliceosome assembly. This is Survival of motor neuron-related-splicing factor 30 (smndc1) from Xenopus tropicalis (Western clawed frog).